The primary structure comprises 141 residues: Lysozyme 1 (141 aa).

Positions 1 to 19 (MKFFIVLVAALALAAPAMG) are cleaved as a signal peptide. The C-type lysozyme domain maps to 20–141 (KTFTRCSLAR…GSLPSINDCF (122 aa)). 4 cysteine pairs are disulfide-bonded: cysteine 25/cysteine 140, cysteine 46/cysteine 130, cysteine 81/cysteine 97, and cysteine 93/cysteine 111. Glutamate 51 is an active-site residue. A glycan (N-linked (GlcNAc...) asparagine) is linked at asparagine 65. Aspartate 69 is a catalytic residue. N-linked (GlcNAc...) asparagine glycosylation is present at asparagine 104.

Belongs to the glycosyl hydrolase 22 family.

The enzyme catalyses Hydrolysis of (1-&gt;4)-beta-linkages between N-acetylmuramic acid and N-acetyl-D-glucosamine residues in a peptidoglycan and between N-acetyl-D-glucosamine residues in chitodextrins.. Its function is as follows. May not function as a self-defense protein, but as a digestive enzyme, probably in the gut of the insect body. Inactive towards Micrococcus luteus. Active toward glycol chitin. The protein is Lysozyme 1 of Musca domestica (House fly).